The following is a 54-amino-acid chain: Low temperature-induced protein lt101.2 (54 aa).

A run of 2 helical transmembrane segments spans residues 2–22 (ASATFIEVILAIILPPVGVFL) and 34–54 (LLLTLLGYIPGIIYAVYVLVA).

The protein belongs to the UPF0057 (PMP3) family.

The protein resides in the membrane. This chain is Low temperature-induced protein lt101.2 (LT101.2), found in Hordeum vulgare (Barley).